The chain runs to 288 residues: Ribosomal RNA small subunit methyltransferase A (288 aa).

S-adenosyl-L-methionine contacts are provided by Asn28, Leu30, Gly55, Glu76, Asp101, and Asn130.

Belongs to the class I-like SAM-binding methyltransferase superfamily. rRNA adenine N(6)-methyltransferase family. RsmA subfamily.

The protein resides in the cytoplasm. The catalysed reaction is adenosine(1518)/adenosine(1519) in 16S rRNA + 4 S-adenosyl-L-methionine = N(6)-dimethyladenosine(1518)/N(6)-dimethyladenosine(1519) in 16S rRNA + 4 S-adenosyl-L-homocysteine + 4 H(+). In terms of biological role, specifically dimethylates two adjacent adenosines (A1518 and A1519) in the loop of a conserved hairpin near the 3'-end of 16S rRNA in the 30S particle. May play a critical role in biogenesis of 30S subunits. The sequence is that of Ribosomal RNA small subunit methyltransferase A from Moorella thermoacetica (strain ATCC 39073 / JCM 9320).